The following is a 266-amino-acid chain: Interleukin-1 beta (266 aa).

Positions 1–113 (MAPVPEPINE…ETSSDEFLCD (113 aa)) are excised as a propeptide.

This sequence belongs to the IL-1 family. As to quaternary structure, monomer. In its precursor form, weakly interacts with full-length MEFV; the mature cytokine does not interact at all. Interacts with integrins ITGAV:ITGBV and ITGA5:ITGB1; integrin-binding is required for IL1B signaling. Interacts with cargo receptor TMED10; the interaction is direct and is required for the secretion of IL1B mature form. Interacts with HSP90AB1; the interaction facilitates cargo translocation into the ERGIC. Interacts with HSP90B1; the interaction facilitates cargo translocation into the ERGIC.

The protein localises to the cytoplasm. It is found in the cytosol. Its subcellular location is the secreted. It localises to the lysosome. The protein resides in the extracellular exosome. In terms of biological role, potent pro-inflammatory cytokine. Initially discovered as the major endogenous pyrogen, induces prostaglandin synthesis, neutrophil influx and activation, T-cell activation and cytokine production, B-cell activation and antibody production, and fibroblast proliferation and collagen production. Promotes Th17 differentiation of T-cells. Synergizes with IL12/interleukin-12 to induce IFNG synthesis from T-helper 1 (Th1) cells. Plays a role in angiogenesis by inducing VEGF production synergistically with TNF and IL6. Involved in transduction of inflammation downstream of pyroptosis: its mature form is specifically released in the extracellular milieu by passing through the gasdermin-D (GSDMD) pore. The chain is Interleukin-1 beta (IL1B) from Cervus elaphus (Red deer).